A 532-amino-acid polypeptide reads, in one-letter code: Purple acid phosphatase 15 (532 aa).

Positions 1–19 are cleaved as a signal peptide; the sequence is MTFLLLLLFCFLSPAISSA. A glycan (N-linked (GlcNAc...) asparagine) is linked at Asn136. Fe cation is bound at residue Asp194. N-linked (GlcNAc...) asparagine glycosylation is present at Asn200. The Fe cation site is built by Asp221 and Tyr224. Asp221 is a Zn(2+) binding site. N-linked (GlcNAc...) asparagine glycosylation is found at Asn231 and Asn264. Asn277 lines the Zn(2+) pocket. Residue Asn277 coordinates substrate. 2 N-linked (GlcNAc...) asparagine glycosylation sites follow: Asn286 and Asn301. Position 359 (His359) interacts with Zn(2+). His369 acts as the Proton donor in catalysis. Position 396 (His396) interacts with Zn(2+). A substrate-binding site is contributed by 396–398; that stretch reads HVH. His398 is a binding site for Fe cation. Residue Asn491 is glycosylated (N-linked (GlcNAc...) asparagine).

Belongs to the metallophosphoesterase superfamily. Purple acid phosphatase family. As to quaternary structure, homodimer. Requires Fe cation as cofactor. The cofactor is Zn(2+). In terms of tissue distribution, expressed in roots, stems, cotyledons, leaves, flowers and siliques.

It localises to the secreted. It carries out the reaction 1D-myo-inositol hexakisphosphate + H2O = 1D-myo-inositol 1,2,3,5,6-pentakisphosphate + phosphate. It catalyses the reaction a phosphate monoester + H2O = an alcohol + phosphate. Its function is as follows. Acid phosphatase activity with p-nitrophenyl phosphate (pNPP), D-myoinositol 1-phosphate (Ins(1)P1), phytic acid and Myo-inositol hexakisphosphate. Low or no activity with Glc-6-P and ATP. Confers shoot growth stimulation, enhanced salt and osmotic stress tolerance, and ABA insensitivity. May modulate ascorbic acid (AsA) levels by controlling the input of myoinositol into this branch of AsA biosynthesis. In Arabidopsis thaliana (Mouse-ear cress), this protein is Purple acid phosphatase 15 (PAP15).